Consider the following 439-residue polypeptide: Probable N-acetylmuramidase (439 aa).

The N-terminal stretch at 1–57 (MPVSRIKVKNRHLKKKAKKPLAFYKPATKFAGAVLIAGTLTTTHELLLQQTSPMVQA) is a signal peptide. 2 disordered regions span residues 218–241 (SAGT…TSST) and 287–320 (SSSS…PASQ). Residues 241-284 (TTYTVKSGDTLWGISQKYGISVAQIQSANNLKSTVIYIGQKLVL) enclose the LysM 1 domain. Positions 287–319 (SSSSSNTNSSTSSGNSAGTTTPTTSVTPAKPAS) are enriched in low complexity. The LysM 2 domain occupies 321-364 (TTIKVKSGDTLWGLSVKYKTTIAQLKSWNHLNSDTIFIGQNLIV). Residues 372–393 (SSSTGSSSASTSSTSNSSAASN) form a disordered region. Positions 395-438 (SIHKVVKGDTLWGLSQKSGSPIASIKAWNHLSSDTILIGQYLRI) constitute a LysM 3 domain.

It belongs to the glycosyl hydrolase 73 family.

It localises to the secreted. It catalyses the reaction Hydrolysis of (1-&gt;4)-beta-linkages between N-acetylmuramic acid and N-acetyl-D-glucosamine residues in a peptidoglycan and between N-acetyl-D-glucosamine residues in chitodextrins.. In terms of biological role, required for cell separation during growth. The chain is Probable N-acetylmuramidase (acmA) from Lactococcus lactis subsp. lactis (strain IL1403) (Streptococcus lactis).